A 62-amino-acid chain; its full sequence is Large ribosomal subunit protein eL37 (62 aa).

Zn(2+)-binding residues include C20, C23, C35, and C38. The C4-type zinc finger occupies C20 to C38.

It belongs to the eukaryotic ribosomal protein eL37 family. Part of the 50S ribosomal subunit. It depends on Zn(2+) as a cofactor.

Binds to the 23S rRNA. The sequence is that of Large ribosomal subunit protein eL37 from Pyrococcus furiosus (strain ATCC 43587 / DSM 3638 / JCM 8422 / Vc1).